Reading from the N-terminus, the 191-residue chain is MKQLCCSCLLWLGLLLTPFSREEEEESRPRKLCGRHLLIEVIKLCGQSDWSRFEMEEQSPMTQFFPHYSRKGKAFNPHPSSSAWRRFTNPVPAGVSQKKGTHTWEPQSLPDYQFEKTELLPKARVFSYHSGKPYVKSVQLQKKSTNKMNTFRSLFWGNHSQRKRRGFADKCCVIGCTKEEMAVACLPFVDF.

The first 22 residues, 1 to 22 (MKQLCCSCLLWLGLLLTPFSRE), serve as a signal peptide directing secretion. 3 disulfides stabilise this stretch: cysteine 33–cysteine 172, cysteine 45–cysteine 185, and cysteine 171–cysteine 176. Residues 53 to 161 (FEMEEQSPMT…RSLFWGNHSQ (109 aa)) constitute a propeptide, connecting peptide.

The protein belongs to the insulin family.

The protein resides in the secreted. Its function is as follows. May have a role in sperm development and fertilization. The chain is Insulin-like peptide INSL6 (Insl6) from Mus musculus (Mouse).